A 117-amino-acid polypeptide reads, in one-letter code: Large ribosomal subunit protein eL18 (117 aa).

The protein belongs to the eukaryotic ribosomal protein eL18 family.

This chain is Large ribosomal subunit protein eL18, found in Archaeoglobus fulgidus (strain ATCC 49558 / DSM 4304 / JCM 9628 / NBRC 100126 / VC-16).